The following is a 514-amino-acid chain: ATP synthase subunit alpha (514 aa).

170–177 contacts ATP; sequence GDRQIGKT.

Belongs to the ATPase alpha/beta chains family. In terms of assembly, F-type ATPases have 2 components, CF(1) - the catalytic core - and CF(0) - the membrane proton channel. CF(1) has five subunits: alpha(3), beta(3), gamma(1), delta(1), epsilon(1). CF(0) has three main subunits: a(1), b(2) and c(9-12). The alpha and beta chains form an alternating ring which encloses part of the gamma chain. CF(1) is attached to CF(0) by a central stalk formed by the gamma and epsilon chains, while a peripheral stalk is formed by the delta and b chains.

It is found in the cell inner membrane. It catalyses the reaction ATP + H2O + 4 H(+)(in) = ADP + phosphate + 5 H(+)(out). Its function is as follows. Produces ATP from ADP in the presence of a proton gradient across the membrane. The alpha chain is a regulatory subunit. The protein is ATP synthase subunit alpha of Pseudomonas syringae pv. tomato (strain ATCC BAA-871 / DC3000).